We begin with the raw amino-acid sequence, 1111 residues long: Cellulose synthase-like protein D4 (1111 aa).

Disordered stretches follow at residues methionine 1 to arginine 26 and aspartate 175 to arginine 202. Polar residues predominate over residues glycine 192–arginine 202. 2 consecutive transmembrane segments (helical) span residues alanine 266 to leucine 286 and alanine 297 to leucine 317. Catalysis depends on residues aspartate 397 and aspartate 809. 6 helical membrane passes run leucine 891 to valine 911, leucine 914 to valine 934, leucine 963 to leucine 983, leucine 1007 to isoleucine 1027, leucine 1040 to glycine 1060, and threonine 1070 to isoleucine 1090.

This sequence belongs to the glycosyltransferase 2 family. Plant cellulose synthase-like D subfamily.

The protein resides in the golgi apparatus membrane. In terms of biological role, thought to be a Golgi-localized beta-glycan synthase that polymerize the backbones of noncellulosic polysaccharides (hemicelluloses) of plant cell wall. This chain is Cellulose synthase-like protein D4 (CSLD4), found in Arabidopsis thaliana (Mouse-ear cress).